The primary structure comprises 62 residues: uncharacterized protein (62 aa).

This is an uncharacterized protein from Invertebrate iridescent virus 6 (IIV-6).